Consider the following 428-residue polypeptide: L-rhamnose isomerase (428 aa).

Mn(2+) is bound by residues histidine 260, aspartate 292, and aspartate 294.

Belongs to the rhamnose isomerase family. Requires Mn(2+) as cofactor.

The protein localises to the cytoplasm. The catalysed reaction is L-rhamnopyranose = L-rhamnulose. It functions in the pathway carbohydrate degradation; L-rhamnose degradation; glycerone phosphate from L-rhamnose: step 1/3. Functionally, catalyzes the interconversion of L-rhamnose and L-rhamnulose. This chain is L-rhamnose isomerase, found in Enterococcus faecalis (strain ATCC 700802 / V583).